A 453-amino-acid polypeptide reads, in one-letter code: UDP-glucose 6-dehydrogenase (453 aa).

NAD(+)-binding positions include 2-19 (RLCV…AACF), valine 11, threonine 121, and glutamate 158. Substrate contacts are provided by residues 154-158 (EFLKE), lysine 210, asparagine 214, 255-259 (FIYAG), and glycine 263. The Nucleophile role is filled by cysteine 266. Position 269 (lysine 269) interacts with NAD(+). Lysine 327 is a binding site for substrate. Arginine 334 provides a ligand contact to NAD(+).

This sequence belongs to the UDP-glucose/GDP-mannose dehydrogenase family.

It catalyses the reaction UDP-alpha-D-glucose + 2 NAD(+) + H2O = UDP-alpha-D-glucuronate + 2 NADH + 3 H(+). It functions in the pathway nucleotide-sugar biosynthesis; UDP-alpha-D-glucuronate biosynthesis; UDP-alpha-D-glucuronate from UDP-alpha-D-glucose: step 1/1. Its pathway is bacterial outer membrane biogenesis; lipopolysaccharide biosynthesis. The polypeptide is UDP-glucose 6-dehydrogenase (udg) (Pseudomonas aeruginosa (strain ATCC 15692 / DSM 22644 / CIP 104116 / JCM 14847 / LMG 12228 / 1C / PRS 101 / PAO1)).